Reading from the N-terminus, the 294-residue chain is Small ribosomal subunit protein uS2 (294 aa).

A compositionally biased stretch (basic and acidic residues) spans 232–245; sequence RAAEQDKAADDKAQ. Residues 232–294 are disordered; the sequence is RAAEQDKAAD…GSEEDGEAAN (63 aa). Residues 246 to 265 are compositionally biased toward low complexity; that stretch reads EQAAAEAAKPEPAAPAPAAE.

It belongs to the universal ribosomal protein uS2 family.

This Desulfatibacillum aliphaticivorans protein is Small ribosomal subunit protein uS2.